The sequence spans 232 residues: Ubiquinone biosynthesis O-methyltransferase (232 aa).

Residues arginine 36, glycine 55, aspartate 76, and methionine 120 each coordinate S-adenosyl-L-methionine.

It belongs to the methyltransferase superfamily. UbiG/COQ3 family.

The catalysed reaction is a 3-demethylubiquinol + S-adenosyl-L-methionine = a ubiquinol + S-adenosyl-L-homocysteine + H(+). The enzyme catalyses a 3-(all-trans-polyprenyl)benzene-1,2-diol + S-adenosyl-L-methionine = a 2-methoxy-6-(all-trans-polyprenyl)phenol + S-adenosyl-L-homocysteine + H(+). It participates in cofactor biosynthesis; ubiquinone biosynthesis. Its function is as follows. O-methyltransferase that catalyzes the 2 O-methylation steps in the ubiquinone biosynthetic pathway. The protein is Ubiquinone biosynthesis O-methyltransferase of Burkholderia thailandensis (strain ATCC 700388 / DSM 13276 / CCUG 48851 / CIP 106301 / E264).